Here is a 218-residue protein sequence, read N- to C-terminus: MRLILLGAPGAGKGTQAAFICQKYGIPQISTGDMLRAAVKAGTPLGQQAKAVMESGGLVSDDLIINLVKERIAQPDCAGGFLFDGFPRTIPQADAMKAAGVKLDYVLEIDVPFSDIIERMSGRRSHPASGRTYHVKFNPPKVEGKDDITGEDLIQRKDDEEETVRKRLEVYSQQTRPLVDYYSAWAKADPASAPKYRAIQGVGSVEEIKQRALAALSS.

Residue G10–T15 participates in ATP binding. The interval S30–V59 is NMP. Residues T31, R36, G57–V59, G85–R88, and Q92 each bind AMP. Residues G122–D159 are LID. ATP contacts are provided by residues R123 and T132–Y133. AMP is bound by residues R156 and R167. G203 provides a ligand contact to ATP.

The protein belongs to the adenylate kinase family. In terms of assembly, monomer.

It localises to the cytoplasm. The catalysed reaction is AMP + ATP = 2 ADP. It participates in purine metabolism; AMP biosynthesis via salvage pathway; AMP from ADP: step 1/1. Functionally, catalyzes the reversible transfer of the terminal phosphate group between ATP and AMP. Plays an important role in cellular energy homeostasis and in adenine nucleotide metabolism. The polypeptide is Adenylate kinase (Variovorax paradoxus (strain S110)).